We begin with the raw amino-acid sequence, 72 residues long: Large ribosomal subunit protein bL28 (72 aa).

This sequence belongs to the bacterial ribosomal protein bL28 family.

This Chlorobium phaeobacteroides (strain DSM 266 / SMG 266 / 2430) protein is Large ribosomal subunit protein bL28.